Consider the following 406-residue polypeptide: S-adenosylmethionine synthase (406 aa).

His16 contacts ATP. Residue Asp18 coordinates Mg(2+). Residue Glu44 participates in K(+) binding. L-methionine contacts are provided by Glu57 and Gln109. The interval 109–119 is flexible loop; it reads QSPQIAQGVDE. ATP contacts are provided by residues 174 to 176, 249 to 250, Asp258, 264 to 265, Ala281, and Lys285; these read DAK, RF, and RK. Asp258 serves as a coordination point for L-methionine. L-methionine is bound at residue Lys289.

Belongs to the AdoMet synthase family. Homotetramer; dimer of dimers. It depends on Mg(2+) as a cofactor. The cofactor is K(+).

The protein localises to the cytoplasm. It catalyses the reaction L-methionine + ATP + H2O = S-adenosyl-L-methionine + phosphate + diphosphate. The protein operates within amino-acid biosynthesis; S-adenosyl-L-methionine biosynthesis; S-adenosyl-L-methionine from L-methionine: step 1/1. In terms of biological role, catalyzes the formation of S-adenosylmethionine (AdoMet) from methionine and ATP. The overall synthetic reaction is composed of two sequential steps, AdoMet formation and the subsequent tripolyphosphate hydrolysis which occurs prior to release of AdoMet from the enzyme. In Sphingopyxis alaskensis (strain DSM 13593 / LMG 18877 / RB2256) (Sphingomonas alaskensis), this protein is S-adenosylmethionine synthase.